Here is a 176-residue protein sequence, read N- to C-terminus: Acireductone dioxygenase (176 aa).

Residues His-100, His-102, Glu-106, and His-145 each coordinate Fe(2+). Ni(2+)-binding residues include His-100, His-102, Glu-106, and His-145.

Belongs to the acireductone dioxygenase (ARD) family. Monomer. Requires Fe(2+) as cofactor. The cofactor is Ni(2+).

The catalysed reaction is 1,2-dihydroxy-5-(methylsulfanyl)pent-1-en-3-one + O2 = 3-(methylsulfanyl)propanoate + CO + formate + 2 H(+). The enzyme catalyses 1,2-dihydroxy-5-(methylsulfanyl)pent-1-en-3-one + O2 = 4-methylsulfanyl-2-oxobutanoate + formate + 2 H(+). Its pathway is amino-acid biosynthesis; L-methionine biosynthesis via salvage pathway; L-methionine from S-methyl-5-thio-alpha-D-ribose 1-phosphate: step 5/6. Its function is as follows. Catalyzes 2 different reactions between oxygen and the acireductone 1,2-dihydroxy-3-keto-5-methylthiopentene (DHK-MTPene) depending upon the metal bound in the active site. Fe-containing acireductone dioxygenase (Fe-ARD) produces formate and 2-keto-4-methylthiobutyrate (KMTB), the alpha-ketoacid precursor of methionine in the methionine recycle pathway. Ni-containing acireductone dioxygenase (Ni-ARD) produces methylthiopropionate, carbon monoxide and formate, and does not lie on the methionine recycle pathway. This Bacillus pumilus (strain SAFR-032) protein is Acireductone dioxygenase.